A 1203-amino-acid chain; its full sequence is DNA-directed RNA polymerase subunit beta (1203 aa).

The disordered stretch occupies residues 1167–1203 (LSKYAQQQEEQRKAAAQTDESKTAPATKNESQPNTQD). Polar residues predominate over residues 1190-1203 (APATKNESQPNTQD).

Belongs to the RNA polymerase beta chain family. As to quaternary structure, the RNAP catalytic core consists of 2 alpha, 1 beta, 1 beta' and 1 omega subunit. When a sigma factor is associated with the core the holoenzyme is formed, which can initiate transcription.

It catalyses the reaction RNA(n) + a ribonucleoside 5'-triphosphate = RNA(n+1) + diphosphate. Functionally, DNA-dependent RNA polymerase catalyzes the transcription of DNA into RNA using the four ribonucleoside triphosphates as substrates. In Levilactobacillus brevis (strain ATCC 367 / BCRC 12310 / CIP 105137 / JCM 1170 / LMG 11437 / NCIMB 947 / NCTC 947) (Lactobacillus brevis), this protein is DNA-directed RNA polymerase subunit beta.